The sequence spans 343 residues: Small ribosomal subunit biogenesis GTPase RsgA (343 aa).

The 160-residue stretch at 116–275 folds into the CP-type G domain; the sequence is RGQLKPVAAN…LIDSPGIREF (160 aa). Residues 163–166 and 217–225 contribute to the GTP site; these read NKAD and GQSGVGKSS. Zn(2+)-binding residues include Cys299, Cys304, His306, and Cys312.

It belongs to the TRAFAC class YlqF/YawG GTPase family. RsgA subfamily. As to quaternary structure, monomer. Associates with 30S ribosomal subunit, binds 16S rRNA. Requires Zn(2+) as cofactor.

It localises to the cytoplasm. Its function is as follows. One of several proteins that assist in the late maturation steps of the functional core of the 30S ribosomal subunit. Helps release RbfA from mature subunits. May play a role in the assembly of ribosomal proteins into the subunit. Circularly permuted GTPase that catalyzes slow GTP hydrolysis, GTPase activity is stimulated by the 30S ribosomal subunit. In Pseudomonas syringae pv. tomato (strain ATCC BAA-871 / DC3000), this protein is Small ribosomal subunit biogenesis GTPase RsgA.